The primary structure comprises 363 residues: GTP-binding protein 1 (363 aa).

An OBG-type G domain is found at 63-287 (ARVAFIGFPS…LKERIWEELN (225 aa)). GTP is bound by residues 69-76 (GFPSVGKS), 115-119 (DLPGI), and 246-249 (KIDA). In terms of domain architecture, TGS spans 287 to 362 (NLYRIYTKRK…EEGDVVTIVT (76 aa)).

It belongs to the TRAFAC class OBG-HflX-like GTPase superfamily. OBG GTPase family.

The polypeptide is GTP-binding protein 1 (gtp1) (Schizosaccharomyces pombe (strain 972 / ATCC 24843) (Fission yeast)).